We begin with the raw amino-acid sequence, 346 residues long: Phosphate acyltransferase (346 aa).

This sequence belongs to the PlsX family. In terms of assembly, homodimer. Probably interacts with PlsY.

It localises to the cytoplasm. It carries out the reaction a fatty acyl-[ACP] + phosphate = an acyl phosphate + holo-[ACP]. Its pathway is lipid metabolism; phospholipid metabolism. Functionally, catalyzes the reversible formation of acyl-phosphate (acyl-PO(4)) from acyl-[acyl-carrier-protein] (acyl-ACP). This enzyme utilizes acyl-ACP as fatty acyl donor, but not acyl-CoA. This chain is Phosphate acyltransferase, found in Geotalea daltonii (strain DSM 22248 / JCM 15807 / FRC-32) (Geobacter daltonii).